Here is a 386-residue protein sequence, read N- to C-terminus: uncharacterized protein (386 aa).

The next 2 helical transmembrane spans lie at 54–74 (AVLQ…AIVA) and 347–367 (LLGG…PIAG).

The protein to M.tuberculosis Rv0628c.

It is found in the cell membrane. This is an uncharacterized protein from Mycobacterium tuberculosis (strain CDC 1551 / Oshkosh).